A 132-amino-acid chain; its full sequence is Movement protein TGB3 (132 aa).

The Cytoplasmic segment spans residues 1–11; it reads MVLVVKVDLSN. A helical membrane pass occupies residues 12-32; that stretch reads IVLYIVAGCVVVSMLYSPFFS. At 33 to 109 the chain is on the lumenal side; the sequence is NDVKASSYAG…TETLFIILSR (77 aa). The chain crosses the membrane as a helical span at residues 110–130; the sequence is LFGLAVFLFMICLMSIVWFWC. The Cytoplasmic segment spans residues 131-132; sequence HR.

The protein belongs to the benyvirus TGB3 movement protein family. In terms of assembly, interacts with movement proteins TGB1 and TGB2.

It localises to the host cell junction. It is found in the host plasmodesma. The protein localises to the host endoplasmic reticulum membrane. Its function is as follows. Participates in the transport of viral RNA to the plasmodesmata. TGBp3 most probably contains signals of plasmodesmata targeting is therefore involved in the targeting of TGBp2, and viral RNAs-TGBp1 (RNP complex), to plasmodesmata. Can gate plasmodesmata and increase their size exclusion limit. In Beta macrocarpa (Beet), this protein is Movement protein TGB3.